We begin with the raw amino-acid sequence, 670 residues long: Solute carrier organic anion transporter family member 1A5 (670 aa).

At 1 to 20 (MGETEKRVATHEVRCFSKIK) the chain is on the cytoplasmic side. Residues 21–40 (MFLLALTWAYVSKSLSGIYM) traverse the membrane as a helical segment. Residues 41–59 (NTMLTQIERQFDIPTSIVG) are Extracellular-facing. The helical transmembrane segment at 60 to 80 (FINGSFEIGNLLLIIFVSYFG) threads the bilayer. Residues 81–86 (TKLHRP) are Cytoplasmic-facing. A helical membrane pass occupies residues 87-111 (IMIGVGCVIMGLGCFLMSLPHFLMG). The Extracellular portion of the chain corresponds to 112–155 (RYEYETTISPTSNLSSNSFLCMENRSQTLKPTQDPAECIKEMKS). N-linked (GlcNAc...) asparagine glycans are attached at residues asparagine 124 and asparagine 135. Residues 156 to 184 (LMWIYVLVGNIIRGIGETPIMPLGISYIE) form a helical membrane-spanning segment. The Cytoplasmic segment spans residues 185-203 (DFAKSENSPLYIGILETGK). A helical membrane pass occupies residues 204–224 (VFGPIVGLLLGSFCASIYVDT). The Extracellular segment spans residues 225–242 (GSVNTDDLTITPTDTRWV). Residues 243–267 (GAWWIGFLICAGVNILSSIPFFFFP) traverse the membrane as a helical segment. The Cytoplasmic segment spans residues 268–311 (KTLPKEGLQDDVDGTNNDKEEKHREKAKEENRGITKDFLPFMKS). The chain crosses the membrane as a helical span at residues 312–333 (LSCNPIYMLLILTSVLQINAFI). The Extracellular segment spans residues 334–353 (NMFTFLPKYLEQQYGKSTAE). A helical transmembrane segment spans residues 354-377 (VVLLIGVYNLPPICIGYLLIGFIM). At 378–381 (KKFK) the chain is on the cytoplasmic side. Residues 382–405 (ITVKKAAYMAFCLSLFEYLLYFLH) form a helical membrane-spanning segment. Residues 406 to 513 (FMITCDNFPV…PECANKLQYF (108 aa)) lie on the Extracellular side of the membrane. The 56-residue stretch at 433–488 (NKVLADCNRGCSCSTNSWDPVCGDNGLAYMSACLAGCKKSVGTGTNMVFQNCSCIR) folds into the Kazal-like domain. 3 disulfide bridges follow: cysteine 439-cysteine 469, cysteine 445-cysteine 465, and cysteine 454-cysteine 486. Residues asparagine 483 and asparagine 492 are each glycosylated (N-linked (GlcNAc...) asparagine). The helical transmembrane segment at 514 to 536 (LIMSVIGSFIYSITAIPGYMVLL) threads the bilayer. The Cytoplasmic segment spans residues 537-545 (RCIKPEEKS). The helical transmembrane segment at 546-571 (LGIGLHAFCTRVFAGIPAPIYFGALI) threads the bilayer. Topologically, residues 572–605 (DRTCLHWGTLKCGEPGACRMYNINNFRRIYLVLP) are extracellular. The chain crosses the membrane as a helical span at residues 606 to 623 (AALRGSSYLPALFILILM). Topologically, residues 624–670 (RKFQFPGEIDSSETELAEMKITVKKSECTDVHGSPQVENDGELKTRL) are cytoplasmic.

This sequence belongs to the organo anion transporter (TC 2.A.60) family. As to expression, highly expressed in the kidney, moderately abundant in the retina, and even lower in the liver. Expressed (at protein level) in the small intestine. Expressed at lower levels in brain,lung, and retina.

The protein localises to the cell membrane. It localises to the basal cell membrane. It carries out the reaction taurocholate(out) = taurocholate(in). The enzyme catalyses glycocholate(out) = glycocholate(in). It catalyses the reaction taurochenodeoxycholate(out) = taurochenodeoxycholate(in). The catalysed reaction is tauroursodeoxycholate(out) = tauroursodeoxycholate(in). It carries out the reaction 3,3',5'-triiodo-L-thyronine(out) = 3,3',5'-triiodo-L-thyronine(in). The enzyme catalyses L-thyroxine(out) = L-thyroxine(in). It catalyses the reaction taurodeoxycholate(out) = taurodeoxycholate(in). The catalysed reaction is glycodeoxycholate(out) = glycodeoxycholate(in). It carries out the reaction glycochenodeoxycholate(out) = glycochenodeoxycholate(in). The enzyme catalyses glycoursodeoxycholate(out) = glycoursodeoxycholate(in). It catalyses the reaction estrone 3-sulfate(out) = estrone 3-sulfate(in). The catalysed reaction is prostaglandin E2(out) = prostaglandin E2(in). It carries out the reaction substance P(out) = substance P(in). Functionally, na(+)-independent transporter that mediates the cellular uptake of a broad range of organic anions such as the endogenous bile salts cholate and deoxycholate, either in their unconjugated or conjugated forms (taurocholate and glycocholate), estrone 3-sulfate and prostaglandin E2, at the plasma membrane. Responsible for intestinal absorption of bile acids. Capable of thyroid hormone transport (both T3 or 3,3',5'-triiodo-L-thyronine, and T4 or L-tyroxine). Plays roles in blood-brain and -cerebrospinal fluid barrier transport of organic anions and signal mediators, and in hormone uptake by neural cells. May also play a role in the reuptake of neuropeptides such as substance P/TAC1 and vasoactive intestinal peptide/VIP released from retinal neurons. Shows a pH-sensitive substrate specificity which may be ascribed to the protonation state of the binding site and leads to a stimulation of substrate transport in an acidic microenvironment. Hydrogencarbonate/HCO3(-) acts as the probable counteranion that exchanges for organic anions. May contribute to regulate the transport of organic compounds in testis across the blood-testis-barrier. The chain is Solute carrier organic anion transporter family member 1A5 (Slco1a5) from Rattus norvegicus (Rat).